A 488-amino-acid polypeptide reads, in one-letter code: Probable cytosol aminopeptidase (488 aa).

Residues lysine 251 and aspartate 256 each coordinate Mn(2+). The active site involves lysine 263. Residues aspartate 274, aspartate 333, and glutamate 335 each contribute to the Mn(2+) site. Arginine 337 is an active-site residue.

This sequence belongs to the peptidase M17 family. The cofactor is Mn(2+).

It localises to the cytoplasm. The catalysed reaction is Release of an N-terminal amino acid, Xaa-|-Yaa-, in which Xaa is preferably Leu, but may be other amino acids including Pro although not Arg or Lys, and Yaa may be Pro. Amino acid amides and methyl esters are also readily hydrolyzed, but rates on arylamides are exceedingly low.. It catalyses the reaction Release of an N-terminal amino acid, preferentially leucine, but not glutamic or aspartic acids.. In terms of biological role, presumably involved in the processing and regular turnover of intracellular proteins. Catalyzes the removal of unsubstituted N-terminal amino acids from various peptides. This is Probable cytosol aminopeptidase from Cenarchaeum symbiosum (strain A).